Here is a 462-residue protein sequence, read N- to C-terminus: tRNA modification GTPase MnmE (462 aa).

(6S)-5-formyl-5,6,7,8-tetrahydrofolate contacts are provided by R26, E91, and R130. In terms of domain architecture, TrmE-type G spans 228–382; it reads GLSTAKIGRP…IEERINDIFF (155 aa). N238 serves as a coordination point for K(+). GTP contacts are provided by residues 238-243, 257-263, and 282-285; these read NVGKSQ, TDIEGTT, and DTAG. Residue S242 coordinates Mg(2+). T257, I259, and T262 together coordinate K(+). Position 263 (T263) interacts with Mg(2+). (6S)-5-formyl-5,6,7,8-tetrahydrofolate is bound at residue K462.

The protein belongs to the TRAFAC class TrmE-Era-EngA-EngB-Septin-like GTPase superfamily. TrmE GTPase family. Homodimer. Heterotetramer of two MnmE and two MnmG subunits. K(+) serves as cofactor.

It is found in the cytoplasm. Its function is as follows. Exhibits a very high intrinsic GTPase hydrolysis rate. Involved in the addition of a carboxymethylaminomethyl (cmnm) group at the wobble position (U34) of certain tRNAs, forming tRNA-cmnm(5)s(2)U34. The protein is tRNA modification GTPase MnmE of Streptococcus agalactiae.